The primary structure comprises 962 residues: MAATSFNVRDLINSNGADAMGVRGLVDAHATKAAEEQFEYIKRSKKVWVRQILSASDGEKMQKRFGGTFDLQLSKNLCPHSFAGAMRQCETLECLSSFPEDSLILDFGGSWLFHWQRQHNVHSCCPVLDARDMARHQERMISMQKCVAHRPGKFESFESPDFCLLKAEDCEVQSPYAISIHGAYDMGFEGLCKAMHSHGTIMLRGTMMFDANMLVFNEGVMEDLNCRWTKEKGDPYGLRGAPCEDMVHFDFIDESTLSYSHSWKNIKSFLTEGGYQIGNVQYVLERCVISYGIMSFKIFAVSGKIPHTRLRHCVWFPKVRDYVNINPSDPRIWSKVRVKLDTVREVEEICFRCPKDVSKIEVMGGESETCGIMSVLYSSTIIVNGMTMMAGERLDVLDYHHVAFSLMLSARRKFDMFGKAMNSLEWKGWVSHFFKSLWPSGDLRDLFGRYFPSLIRYYDKIEFVEKLTHCEVFVNELGMTDDKEQRDVVAEAADVLKNTLLKVAIKMSLDKTFRPAEEKKEERTTTTTVTSSAVGDVDERPAGTVSGPTIQAPSVTQENTVTSLSEPLDGRLAVRLEAMKEYKRYLLKLQKNTESNLAGLWSLCGGTSDSNNLISTEVLRIMRQSDSLVNLHKADGGWLFPNDFEYMVGYNSSGLGEKRPNEVFLVNKDCVLNNNVLLANGVPAQPPKGNINLMDGVAGCGKTTAIKRAFVFESDLIVTANKKSSEDILKAMFRDTPDIGRNKVRTADSVLMHGVAHKVKRVLFDEVSLVHFGQLCAILTISGAEELIGFGDSEQISFVSRDRLFDMKYHKLSPDSSDQQIRTFRCPKDVVECVKIMARKVGARGSKYNNWFTTSAVRKSLGYHKVSSINESPLRPDVHYLTMTQADKASLLSKARETRFRPSVSTIDEVIKTTHESQGISVPKVILWRGKSTKCDLFTDKMELRFGCCHQASRKFRLLFGC.

An Alphavirus-like MT domain is found at 71 to 270 (LQLSKNLCPH…HSWKNIKSFL (200 aa)). The tract at residues 79–356 (PHSFAGAMRQ…EEICFRCPKD (278 aa)) is methyltransferase. The tract at residues 536–561 (DVDERPAGTVSGPTIQAPSVTQENTV) is disordered. Residues 546–561 (SGPTIQAPSVTQENTV) are compositionally biased toward polar residues. Residues 667–820 (NKDCVLNNNV…KLSPDSSDQQ (154 aa)) form the (+)RNA virus helicase ATP-binding domain. Positions 693-941 (LMDGVAGCGK…STKCDLFTDK (249 aa)) are ATP-dependent helicase. Residues 821-962 (IRTFRCPKDV…SRKFRLLFGC (142 aa)) enclose the (+)RNA virus helicase C-terminal domain.

It belongs to the bromoviridae replication protein 1a family. As to quaternary structure, interacts with RNA-directed RNA polymerase 2a.

The protein resides in the host endoplasmic reticulum membrane. Functionally, involved in the virus replication. Contains a helicase domain and a methyltransferase domain. The methyltransferase domain is probably involved in viral RNA capping. Involved in the formation of ER membrane spherular invaginations in which RNA replication complexes form. This is Replication protein 1a from Solanum lycopersicum (Tomato).